We begin with the raw amino-acid sequence, 391 residues long: CBS domain-containing protein CBSX5 (391 aa).

CBS domains follow at residues 16–81 (GKPP…DHDH) and 331–391 (MARK…ENDM).

The chain is CBS domain-containing protein CBSX5 (CBSX5) from Arabidopsis thaliana (Mouse-ear cress).